The primary structure comprises 1168 residues: Carboxylic acid reductase (1168 aa).

Residues His290, Ser385, 407–408, Thr412, Asp485, 497–500, Lys506, and Lys606 contribute to the AMP site; these read EG and YLDR. In terms of domain architecture, Carrier spans 645–720; the sequence is APVLPTLCRA…ALADHIEAAR (76 aa). Ser679 is modified (O-(pantetheine 4'-phosphoryl)serine). Residues 777 to 780, Arg804, Arg814, 844 to 845, 870 to 872, Ser910, Tyr946, and Lys950 each bind NADP(+); these read TGFL, DK, and PAA.

Belongs to the ATP-dependent AMP-binding enzyme family. Carboxylic acid reductase subfamily. Requires pantetheine 4'-phosphate as cofactor.

It catalyses the reaction a carboxylate + ATP + NADPH + H(+) = an aldehyde + AMP + diphosphate + NADP(+). The enzyme catalyses a medium-chain fatty acid + ATP + H(+) = a medium-chain fatty acyl-AMP + diphosphate. The catalysed reaction is a long-chain fatty acid + ATP + H(+) = a long-chain fatty acyl-AMP + diphosphate. It carries out the reaction dodecanoate + ATP + H(+) = dodecanoyl-AMP + diphosphate. It catalyses the reaction hexadecanoate + ATP + H(+) = hexadecanoyl-AMP + diphosphate. Its function is as follows. Catalyzes the ATP- and NADPH-dependent reduction of carboxylic acids to the corresponding aldehydes. In vitro, also catalyzes the activation of medium/long-chain fatty acids as acyl-adenylates (acyl-AMP). In Mycobacterium tuberculosis (strain ATCC 25618 / H37Rv), this protein is Carboxylic acid reductase.